Reading from the N-terminus, the 260-residue chain is Global transcriptional regulator CodY (260 aa).

A GAF domain region spans residues 1–159 (MPNLLEKTRK…SSTVVGIQLL (159 aa)). A DNA-binding region (H-T-H motif) is located at residues 207–226 (ASVIADRIGITRSVIVNALR).

It belongs to the CodY family.

It localises to the cytoplasm. Functionally, DNA-binding global transcriptional regulator which is involved in the adaptive response to starvation and acts by directly or indirectly controlling the expression of numerous genes in response to nutrient availability. During rapid exponential growth, CodY is highly active and represses genes whose products allow adaptation to nutrient depletion. The protein is Global transcriptional regulator CodY of Streptococcus equi subsp. equi (strain 4047).